The chain runs to 349 residues: Core protein VP7 (349 aa).

Asn287 carries N-linked (GlcNAc...) asparagine; by host glycosylation.

Belongs to the orbivirus VP7 family. Homotrimer that assemble in a complex of 260 capsomers on an inner scaffold composed of VP3.

The protein resides in the virion. Functionally, the VP7 protein is one of the five proteins (with VP1, VP3, VP4, and VP6) which form the inner capsid of the virus. This is Core protein VP7 (Segment-7) from Antilocapra americana (Pronghorn).